The sequence spans 419 residues: Isocitrate dehydrogenase [NADP] (419 aa).

Thr-102 contributes to the NADP(+) binding site. Residues Ser-111, Asn-113, Arg-117, Arg-127, and Arg-151 each coordinate D-threo-isocitrate. Residue Asp-306 participates in Mg(2+) binding. NADP(+) contacts are provided by residues 338–344 (HGSAPKY), Asn-351, Tyr-390, and Arg-394.

Belongs to the isocitrate and isopropylmalate dehydrogenases family. As to quaternary structure, homodimer. The cofactor is Mg(2+). It depends on Mn(2+) as a cofactor.

The catalysed reaction is D-threo-isocitrate + NADP(+) = 2-oxoglutarate + CO2 + NADPH. In terms of biological role, catalyzes the oxidative decarboxylation of isocitrate to 2-oxoglutarate and carbon dioxide with the concomitant reduction of NADP(+). This chain is Isocitrate dehydrogenase [NADP], found in Haloferax volcanii (strain ATCC 29605 / DSM 3757 / JCM 8879 / NBRC 14742 / NCIMB 2012 / VKM B-1768 / DS2) (Halobacterium volcanii).